Reading from the N-terminus, the 430-residue chain is Lipoyl synthase, mitochondrial (430 aa).

A mitochondrion-targeting transit peptide spans 1-37 (MAASTGKLRTLFSAHSSLSARPSSALPALRLTILRSY). The segment covering 40–56 (TTPPDSSISNPSNPSTT) has biased composition (low complexity). Residues 40–64 (TTPPDSSISNPSNPSTTVKRPPTAF) are disordered. Cysteine 141, cysteine 146, cysteine 152, cysteine 172, cysteine 176, cysteine 179, and serine 387 together coordinate [4Fe-4S] cluster. A Radical SAM core domain is found at 155–376 (GSSKSAATAT…KERALEMGFL (222 aa)).

It belongs to the radical SAM superfamily. Lipoyl synthase family. [4Fe-4S] cluster serves as cofactor.

It is found in the mitochondrion. It carries out the reaction [[Fe-S] cluster scaffold protein carrying a second [4Fe-4S](2+) cluster] + N(6)-octanoyl-L-lysyl-[protein] + 2 oxidized [2Fe-2S]-[ferredoxin] + 2 S-adenosyl-L-methionine + 4 H(+) = [[Fe-S] cluster scaffold protein] + N(6)-[(R)-dihydrolipoyl]-L-lysyl-[protein] + 4 Fe(3+) + 2 hydrogen sulfide + 2 5'-deoxyadenosine + 2 L-methionine + 2 reduced [2Fe-2S]-[ferredoxin]. The protein operates within protein modification; protein lipoylation via endogenous pathway; protein N(6)-(lipoyl)lysine from octanoyl-[acyl-carrier-protein]: step 2/2. Functionally, catalyzes the radical-mediated insertion of two sulfur atoms into the C-6 and C-8 positions of the octanoyl moiety bound to the lipoyl domains of lipoate-dependent enzymes, thereby converting the octanoylated domains into lipoylated derivatives. This is Lipoyl synthase, mitochondrial from Blastomyces gilchristii (strain SLH14081) (Blastomyces dermatitidis).